Reading from the N-terminus, the 714-residue chain is Fatty acid oxidation complex subunit alpha (714 aa).

The interval 1-190 (MEMASAFTLN…KLGLVDDVVP (190 aa)) is enoyl-CoA hydratase. The interval 306–714 (APLNSVGILG…FWKTTATDLQ (409 aa)) is 3-hydroxyacyl-CoA dehydrogenase.

The protein in the N-terminal section; belongs to the enoyl-CoA hydratase/isomerase family. In the central section; belongs to the 3-hydroxyacyl-CoA dehydrogenase family. As to quaternary structure, heterotetramer of two alpha chains (FadJ) and two beta chains (FadI).

The protein resides in the cytoplasm. It carries out the reaction a (3S)-3-hydroxyacyl-CoA = a (2E)-enoyl-CoA + H2O. It catalyses the reaction a 4-saturated-(3S)-3-hydroxyacyl-CoA = a (3E)-enoyl-CoA + H2O. The catalysed reaction is a (3S)-3-hydroxyacyl-CoA + NAD(+) = a 3-oxoacyl-CoA + NADH + H(+). The enzyme catalyses (3S)-3-hydroxybutanoyl-CoA = (3R)-3-hydroxybutanoyl-CoA. It functions in the pathway lipid metabolism; fatty acid beta-oxidation. Its function is as follows. Catalyzes the formation of a hydroxyacyl-CoA by addition of water on enoyl-CoA. Also exhibits 3-hydroxyacyl-CoA epimerase and 3-hydroxyacyl-CoA dehydrogenase activities. The chain is Fatty acid oxidation complex subunit alpha from Shigella boydii serotype 4 (strain Sb227).